The following is a 204-amino-acid chain: Small ribosomal subunit protein uS4 (204 aa).

In terms of domain architecture, S4 RNA-binding spans 95–157 (RRLDNTVFRM…KGIHSIIRHN (63 aa)).

Belongs to the universal ribosomal protein uS4 family. As to quaternary structure, part of the 30S ribosomal subunit. Contacts protein S5. The interaction surface between S4 and S5 is involved in control of translational fidelity.

Functionally, one of the primary rRNA binding proteins, it binds directly to 16S rRNA where it nucleates assembly of the body of the 30S subunit. Its function is as follows. With S5 and S12 plays an important role in translational accuracy. This Treponema pallidum (strain Nichols) protein is Small ribosomal subunit protein uS4.